We begin with the raw amino-acid sequence, 238 residues long: Isoamyl acetate-hydrolyzing esterase (238 aa).

S12 functions as the Nucleophile in the catalytic mechanism. The active-site Proton donor is the D187. The active-site Proton acceptor is the H190.

This sequence belongs to the 'GDSL' lipolytic enzyme family. IAH1 subfamily. As to quaternary structure, homodimer.

It catalyses the reaction 3-methylbutyl acetate + H2O = 3-methylbutanol + acetate + H(+). Its function is as follows. Plays a crucial role in the hydrolysis of isoamyl acetate in sake mash. Hydrolyzes short chain esters from acetate (C2) to hexanoate (C6), showing more specificity for shorter chain exters. No activity for decanoate (C10) esters. The chain is Isoamyl acetate-hydrolyzing esterase from Saccharomyces cerevisiae (strain ATCC 204508 / S288c) (Baker's yeast).